The chain runs to 82 residues: Small ribosomal subunit protein bS16 (82 aa).

The protein belongs to the bacterial ribosomal protein bS16 family.

This Proteus mirabilis (strain HI4320) protein is Small ribosomal subunit protein bS16.